Consider the following 135-residue polypeptide: Small ribosomal subunit protein uS11 (135 aa).

The tract at residues Met-1 to Val-22 is disordered.

This sequence belongs to the universal ribosomal protein uS11 family. Part of the 30S ribosomal subunit. Interacts with proteins S7 and S18. Binds to IF-3.

In terms of biological role, located on the platform of the 30S subunit, it bridges several disparate RNA helices of the 16S rRNA. Forms part of the Shine-Dalgarno cleft in the 70S ribosome. The polypeptide is Small ribosomal subunit protein uS11 (Nocardioides sp. (strain ATCC BAA-499 / JS614)).